The following is a 348-amino-acid chain: Dihydroorotase (348 aa).

Zn(2+) is bound by residues His17 and His19. Residues 19-21 (HLR) and Asn45 each bind substrate. Residues Lys103, His140, and His178 each contribute to the Zn(2+) site. An N6-carboxylysine modification is found at Lys103. His140 serves as a coordination point for substrate. Position 223 (Leu223) interacts with substrate. Zn(2+) is bound at residue Asp251. Asp251 is an active-site residue. Substrate contacts are provided by His255 and Ala267.

The protein belongs to the metallo-dependent hydrolases superfamily. DHOase family. Class II DHOase subfamily. Homodimer. Zn(2+) is required as a cofactor.

The enzyme catalyses (S)-dihydroorotate + H2O = N-carbamoyl-L-aspartate + H(+). The protein operates within pyrimidine metabolism; UMP biosynthesis via de novo pathway; (S)-dihydroorotate from bicarbonate: step 3/3. Its function is as follows. Catalyzes the reversible cyclization of carbamoyl aspartate to dihydroorotate. This Shigella sonnei (strain Ss046) protein is Dihydroorotase.